A 124-amino-acid chain; its full sequence is MALNKEDILTWLEGAKTMEVVDLVTAIEEKFGVTAAVAAGVGGAVSAGSADSEEQTEFDVILMSFGDSKINVIKEVRAITGLGLGEAKALVEAAPKAIKEGLSKSDAEELKKKLEAVGAKVEVK.

The protein belongs to the bacterial ribosomal protein bL12 family. As to quaternary structure, homodimer. Part of the ribosomal stalk of the 50S ribosomal subunit. Forms a multimeric L10(L12)X complex, where L10 forms an elongated spine to which 2 to 4 L12 dimers bind in a sequential fashion. Binds GTP-bound translation factors.

In terms of biological role, forms part of the ribosomal stalk which helps the ribosome interact with GTP-bound translation factors. Is thus essential for accurate translation. The chain is Large ribosomal subunit protein bL12 from Borreliella burgdorferi (strain ZS7) (Borrelia burgdorferi).